We begin with the raw amino-acid sequence, 37 residues long: Cytochrome b6-f complex subunit 5 (37 aa).

The chain crosses the membrane as a helical span at residues 5-25 (LLCGIVLGLIPVTLLGLFVAA).

The protein belongs to the PetG family. The 4 large subunits of the cytochrome b6-f complex are cytochrome b6, subunit IV (17 kDa polypeptide, PetD), cytochrome f and the Rieske protein, while the 4 small subunits are PetG, PetL, PetM and PetN. The complex functions as a dimer.

It is found in the cellular thylakoid membrane. In terms of biological role, component of the cytochrome b6-f complex, which mediates electron transfer between photosystem II (PSII) and photosystem I (PSI), cyclic electron flow around PSI, and state transitions. PetG is required for either the stability or assembly of the cytochrome b6-f complex. The polypeptide is Cytochrome b6-f complex subunit 5 (Synechococcus sp. (strain WH7803)).